Reading from the N-terminus, the 172-residue chain is Adenine phosphoribosyltransferase (172 aa).

Belongs to the purine/pyrimidine phosphoribosyltransferase family. Homodimer.

The protein resides in the cytoplasm. It catalyses the reaction AMP + diphosphate = 5-phospho-alpha-D-ribose 1-diphosphate + adenine. Its pathway is purine metabolism; AMP biosynthesis via salvage pathway; AMP from adenine: step 1/1. In terms of biological role, catalyzes a salvage reaction resulting in the formation of AMP, that is energically less costly than de novo synthesis. This is Adenine phosphoribosyltransferase from Clostridium botulinum (strain Eklund 17B / Type B).